The chain runs to 115 residues: Holo-[acyl-carrier-protein] synthase (115 aa).

Residues Asp8 and Glu50 each contribute to the Mg(2+) site.

This sequence belongs to the P-Pant transferase superfamily. AcpS family. Requires Mg(2+) as cofactor.

The protein localises to the cytoplasm. The catalysed reaction is apo-[ACP] + CoA = holo-[ACP] + adenosine 3',5'-bisphosphate + H(+). Functionally, transfers the 4'-phosphopantetheine moiety from coenzyme A to a Ser of acyl-carrier-protein. The chain is Holo-[acyl-carrier-protein] synthase from Renibacterium salmoninarum (strain ATCC 33209 / DSM 20767 / JCM 11484 / NBRC 15589 / NCIMB 2235).